The primary structure comprises 870 residues: Leucine--tRNA ligase (870 aa).

Positions 43–53 (PYPSGRLHMGH) match the 'HIGH' region motif. The short motif at 626–630 (KMSKS) is the 'KMSKS' region element. Residue lysine 629 coordinates ATP.

This sequence belongs to the class-I aminoacyl-tRNA synthetase family.

It is found in the cytoplasm. The catalysed reaction is tRNA(Leu) + L-leucine + ATP = L-leucyl-tRNA(Leu) + AMP + diphosphate. The sequence is that of Leucine--tRNA ligase from Pseudoalteromonas atlantica (strain T6c / ATCC BAA-1087).